A 300-amino-acid polypeptide reads, in one-letter code: Acetylglutamate kinase (300 aa).

Residues 68–69 (GG), Arg-90, and Asn-195 contribute to the substrate site.

It belongs to the acetylglutamate kinase family. ArgB subfamily.

It localises to the cytoplasm. It carries out the reaction N-acetyl-L-glutamate + ATP = N-acetyl-L-glutamyl 5-phosphate + ADP. Its pathway is amino-acid biosynthesis; L-arginine biosynthesis; N(2)-acetyl-L-ornithine from L-glutamate: step 2/4. Catalyzes the ATP-dependent phosphorylation of N-acetyl-L-glutamate. This is Acetylglutamate kinase from Stutzerimonas stutzeri (strain A1501) (Pseudomonas stutzeri).